A 161-amino-acid chain; its full sequence is UPF0225 protein GSU1048 (161 aa).

The protein belongs to the UPF0225 family.

In Geobacter sulfurreducens (strain ATCC 51573 / DSM 12127 / PCA), this protein is UPF0225 protein GSU1048.